Here is a 378-residue protein sequence, read N- to C-terminus: GTP 3',8-cyclase 3 (378 aa).

The 220-residue stretch at Arg40 to Ile259 folds into the Radical SAM core domain. Arg49 lines the GTP pocket. [4Fe-4S] cluster-binding residues include Cys56 and Cys60. Tyr62 is an S-adenosyl-L-methionine binding site. A [4Fe-4S] cluster-binding site is contributed by Cys63. GTP is bound at residue Arg99. Position 103 (Gly103) interacts with S-adenosyl-L-methionine. Thr134 contributes to the GTP binding site. Residue Ser158 participates in S-adenosyl-L-methionine binding. GTP is bound at residue Lys195. Residue Met229 participates in S-adenosyl-L-methionine binding. 2 residues coordinate [4Fe-4S] cluster: Cys292 and Cys295. Arg297–Arg299 contributes to the GTP binding site. Cys309 is a binding site for [4Fe-4S] cluster.

This sequence belongs to the radical SAM superfamily. MoaA family. As to quaternary structure, monomer and homodimer. It depends on [4Fe-4S] cluster as a cofactor.

The enzyme catalyses GTP + AH2 + S-adenosyl-L-methionine = (8S)-3',8-cyclo-7,8-dihydroguanosine 5'-triphosphate + 5'-deoxyadenosine + L-methionine + A + H(+). The protein operates within cofactor biosynthesis; molybdopterin biosynthesis. Functionally, catalyzes the cyclization of GTP to (8S)-3',8-cyclo-7,8-dihydroguanosine 5'-triphosphate. The protein is GTP 3',8-cyclase 3 of Mycobacterium bovis (strain ATCC BAA-935 / AF2122/97).